We begin with the raw amino-acid sequence, 279 residues long: Thymidylate synthase (279 aa).

Residue 133-134 (RR) participates in dUMP binding. Residue C154 is the Nucleophile of the active site. DUMP is bound by residues 178-181 (RSND), N189, and 219-221 (HIY). A (6R)-5,10-methylene-5,6,7,8-tetrahydrofolate-binding site is contributed by D181. Position 278 (A278) interacts with (6R)-5,10-methylene-5,6,7,8-tetrahydrofolate.

This sequence belongs to the thymidylate synthase family. Bacterial-type ThyA subfamily. Homodimer.

Its subcellular location is the cytoplasm. The catalysed reaction is dUMP + (6R)-5,10-methylene-5,6,7,8-tetrahydrofolate = 7,8-dihydrofolate + dTMP. Its pathway is pyrimidine metabolism; dTTP biosynthesis. Its function is as follows. Catalyzes the reductive methylation of 2'-deoxyuridine-5'-monophosphate (dUMP) to 2'-deoxythymidine-5'-monophosphate (dTMP) while utilizing 5,10-methylenetetrahydrofolate (mTHF) as the methyl donor and reductant in the reaction, yielding dihydrofolate (DHF) as a by-product. This enzymatic reaction provides an intracellular de novo source of dTMP, an essential precursor for DNA biosynthesis. The sequence is that of Thymidylate synthase from Streptococcus pneumoniae (strain 70585).